A 112-amino-acid polypeptide reads, in one-letter code: Putative pterin-4-alpha-carbinolamine dehydratase (112 aa).

This sequence belongs to the pterin-4-alpha-carbinolamine dehydratase family.

The catalysed reaction is (4aS,6R)-4a-hydroxy-L-erythro-5,6,7,8-tetrahydrobiopterin = (6R)-L-erythro-6,7-dihydrobiopterin + H2O. This is Putative pterin-4-alpha-carbinolamine dehydratase from Vibrio parahaemolyticus serotype O3:K6 (strain RIMD 2210633).